The primary structure comprises 226 residues: Cytidylate kinase (226 aa).

12–20 (GPSGAGKGT) provides a ligand contact to ATP.

Belongs to the cytidylate kinase family. Type 1 subfamily.

Its subcellular location is the cytoplasm. The enzyme catalyses CMP + ATP = CDP + ADP. The catalysed reaction is dCMP + ATP = dCDP + ADP. The sequence is that of Cytidylate kinase from Colwellia psychrerythraea (strain 34H / ATCC BAA-681) (Vibrio psychroerythus).